The following is a 66-amino-acid chain: Type 3 secretion system chaperone YscE (66 aa).

It belongs to the YscE family. As to quaternary structure, component of the heterodimeric YscE-YscG chaperone. The YscE-YscG chaperone forms a stable ternary complex with YscF/SctF. YscE interacts with YscG, but makes very little direct contact with YscF. Homodimer in solution.

It is found in the cytoplasm. Functionally, chaperone of the type III secretion system (T3SS), also called injectisome, which is used to inject bacterial effector proteins into eukaryotic host cells. Along with YscG, prevents premature polymerization of the YscF/SctF needle protein within the cytoplasm. Is also required for stable expression of cytosolic YscF and for YscF secretion. Likely plays a role in targeting YscF present in the cytosolic YscEFG complex to the T3SS apparatus. Required for Yop secretion. This Yersinia pestis protein is Type 3 secretion system chaperone YscE.